Reading from the N-terminus, the 122-residue chain is Large ribosomal subunit protein uL18 (122 aa).

It belongs to the universal ribosomal protein uL18 family. Part of the 50S ribosomal subunit; part of the 5S rRNA/L5/L18/L25 subcomplex. Contacts the 5S and 23S rRNAs.

Functionally, this is one of the proteins that bind and probably mediate the attachment of the 5S RNA into the large ribosomal subunit, where it forms part of the central protuberance. The chain is Large ribosomal subunit protein uL18 from Pseudothermotoga lettingae (strain ATCC BAA-301 / DSM 14385 / NBRC 107922 / TMO) (Thermotoga lettingae).